A 165-amino-acid polypeptide reads, in one-letter code: Phosphopantetheine adenylyltransferase (165 aa).

Threonine 11 is a substrate binding site. Residues 11–12 and histidine 19 each bind ATP; that span reads TF. Positions 43, 75, and 89 each coordinate substrate. ATP is bound by residues 90 to 92, glutamate 100, and 125 to 131; these read GLR and YQFISST.

It belongs to the bacterial CoaD family. Homohexamer. Mg(2+) serves as cofactor.

Its subcellular location is the cytoplasm. The catalysed reaction is (R)-4'-phosphopantetheine + ATP + H(+) = 3'-dephospho-CoA + diphosphate. Its pathway is cofactor biosynthesis; coenzyme A biosynthesis; CoA from (R)-pantothenate: step 4/5. Its function is as follows. Reversibly transfers an adenylyl group from ATP to 4'-phosphopantetheine, yielding dephospho-CoA (dPCoA) and pyrophosphate. In Acidovorax ebreus (strain TPSY) (Diaphorobacter sp. (strain TPSY)), this protein is Phosphopantetheine adenylyltransferase.